The chain runs to 153 residues: NAD(P)H-quinone oxidoreductase subunit N (153 aa).

Belongs to the complex I NdhN subunit family. As to quaternary structure, NDH-1 can be composed of about 15 different subunits; different subcomplexes with different compositions have been identified which probably have different functions.

It is found in the cellular thylakoid membrane. It carries out the reaction a plastoquinone + NADH + (n+1) H(+)(in) = a plastoquinol + NAD(+) + n H(+)(out). The enzyme catalyses a plastoquinone + NADPH + (n+1) H(+)(in) = a plastoquinol + NADP(+) + n H(+)(out). In terms of biological role, NDH-1 shuttles electrons from an unknown electron donor, via FMN and iron-sulfur (Fe-S) centers, to quinones in the respiratory and/or the photosynthetic chain. The immediate electron acceptor for the enzyme in this species is believed to be plastoquinone. Couples the redox reaction to proton translocation, and thus conserves the redox energy in a proton gradient. Cyanobacterial NDH-1 also plays a role in inorganic carbon-concentration. The protein is NAD(P)H-quinone oxidoreductase subunit N of Prochlorococcus marinus (strain MIT 9303).